The primary structure comprises 636 residues: Endoglucanase 4 (636 aa).

The first 25 residues, 1–25 (MTRRWSFLVQCFTFKKKEGVRSRYM), serve as a signal peptide directing secretion. Catalysis depends on D82, which acts as the Nucleophile. Residues H400, D438, and E447 contribute to the active site. In terms of domain architecture, CBM3 spans 478–635 (KVEDEFFVEA…GDLVFGTLPN (158 aa)).

This sequence belongs to the glycosyl hydrolase 9 (cellulase E) family.

The protein resides in the secreted. It carries out the reaction Endohydrolysis of (1-&gt;4)-beta-D-glucosidic linkages in cellulose, lichenin and cereal beta-D-glucans.. The chain is Endoglucanase 4 from Bacillus sp. (strain KSM-522).